The sequence spans 353 residues: Ribosome biogenesis protein BRX1 homolog (353 aa).

Positions 1 to 10 (MAATKRKRRG) are enriched in basic residues. The interval 1-46 (MAATKRKRRGGLAVQAKKLKRDAKDGKLPAKANDVSEEAAEEEKDR) is disordered. The Brix domain maps to 60 to 249 (ERILIFSSRG…LIKIFQGSFG (190 aa)). Lysine 160 is covalently cross-linked (Glycyl lysine isopeptide (Lys-Gly) (interchain with G-Cter in SUMO2)). Serine 261 carries the phosphoserine modification. N6-acetyllysine is present on lysine 276. Residues lysine 314 and lysine 322 each participate in a glycyl lysine isopeptide (Lys-Gly) (interchain with G-Cter in SUMO2) cross-link.

The protein belongs to the BRX1 family.

The protein localises to the nucleus. Its subcellular location is the nucleolus. Required for biogenesis of the 60S ribosomal subunit. The protein is Ribosome biogenesis protein BRX1 homolog (BRIX1) of Bos taurus (Bovine).